We begin with the raw amino-acid sequence, 421 residues long: O-glycoside alpha-1,2-mannosyltransferase homolog 5 (421 aa).

Glu318 acts as the Nucleophile in catalysis.

It belongs to the glycosyltransferase 15 family.

It localises to the cytoplasm. In terms of biological role, probable mannosyltransferase involved in O-glycosylation of cell wall and secreted proteins. This Schizosaccharomyces pombe (strain 972 / ATCC 24843) (Fission yeast) protein is O-glycoside alpha-1,2-mannosyltransferase homolog 5 (omh5).